The chain runs to 348 residues: MNGTEGPNFYVPFSNKTGVVRSPFEAPQYYLAEPWQFSMLAAYMFLLIMLGFPINFLTLYVTVQHKKLRTPLNYILLNLAVADLFMVFGGFTTTLYTSLHGYFVFGPTGCNLEGFFATLGGEIALWSLVVLAIERYVVVCKPMSNFRFGENHAIMGVAFTWVMALACAAPPLVGWSRYIPEGMQCSCGIDYYTPHEETNNESFVIYMFVVHFIIPLIVIFFCYGQLVFTVKEAAAQQQESATTQKAEKEVTRMVIIMVIAFLICWLPYAGVAFYIFTHQGSDFGPIFMTIPAFFAKTSAVYNPVIYIMMNKQFRNCMVTTLCCGKNPLGDDEASTTVSKTETSQVAPA.

Residue M1 is modified to N-acetylmethionine. The Extracellular portion of the chain corresponds to 1 to 36 (MNGTEGPNFYVPFSNKTGVVRSPFEAPQYYLAEPWQ). Residues N2 and N15 are each glycosylated (N-linked (GlcNAc...) asparagine). The helical transmembrane segment at 37–61 (FSMLAAYMFLLIMLGFPINFLTLYV) threads the bilayer. The Cytoplasmic portion of the chain corresponds to 62 to 73 (TVQHKKLRTPLN). A helical transmembrane segment spans residues 74-96 (YILLNLAVADLFMVFGGFTTTLY). At 97–110 (TSLHGYFVFGPTGC) the chain is on the extracellular side. C110 and C187 are joined by a disulfide. A helical membrane pass occupies residues 111-133 (NLEGFFATLGGEIALWSLVVLAI). Residues 134–136 (ERY) carry the 'Ionic lock' involved in activated form stabilization motif. The Cytoplasmic portion of the chain corresponds to 134 to 152 (ERYVVVCKPMSNFRFGENH). Residues 153–173 (AIMGVAFTWVMALACAAPPLV) form a helical membrane-spanning segment. Over 174–202 (GWSRYIPEGMQCSCGIDYYTPHEETNNES) the chain is Extracellular. Zn(2+) is bound at residue E201. The helical transmembrane segment at 203–224 (FVIYMFVVHFIIPLIVIFFCYG) threads the bilayer. Residues 225–252 (QLVFTVKEAAAQQQESATTQKAEKEVTR) are Cytoplasmic-facing. A helical membrane pass occupies residues 253 to 274 (MVIIMVIAFLICWLPYAGVAFY). At 275–286 (IFTHQGSDFGPI) the chain is on the extracellular side. Q279 provides a ligand contact to Zn(2+). The helical transmembrane segment at 287-308 (FMTIPAFFAKTSAVYNPVIYIM) threads the bilayer. K296 carries the N6-(retinylidene)lysine modification. The Cytoplasmic portion of the chain corresponds to 309–348 (MNKQFRNCMVTTLCCGKNPLGDDEASTTVSKTETSQVAPA). S-palmitoyl cysteine attachment occurs at residues C322 and C323. The segment at 330–348 (DDEASTTVSKTETSQVAPA) is interaction with SAG. The residue at position 334 (S334) is a Phosphoserine. Phosphothreonine is present on residues T335 and T336. Residue S338 is modified to Phosphoserine. Residues T340 and T342 each carry the phosphothreonine modification. At S343 the chain carries Phosphoserine; by RK and GRK7.

This sequence belongs to the G-protein coupled receptor 1 family. Opsin subfamily. In terms of assembly, homodimer. May form a complex composed of RHO, GRK1 and RCVRN in a Ca(2+)-dependent manner; RCVRN prevents the interaction between GRK1 and RHO. Interacts with GRK1. Interacts (phosphorylated form) with SAG. Interacts with GNAT1. Interacts with GNAT3. SAG and G-proteins compete for a common binding site. Interacts with PRCD; the interaction promotes PRCD stability. Forms a complex with ASAP1 and ARF4. Forms a complex with ASAP1, RAB11A, Rabin8/RAB3IP, ARF4 and RAB11FIP3; the complex regulates Golgi-to-cilia rhodopsin/RHO transport in photoreceptors. Phosphorylated on some or all of the serine and threonine residues present in the C-terminal region. Post-translationally, contains one covalently linked retinal chromophore. Upon light absorption, the covalently bound 11-cis-retinal is converted to all-trans-retinal. After hydrolysis of the Schiff base and release of the covalently bound all-trans-retinal, active rhodopsin is regenerated by binding of a fresh molecule of 11-cis-retinal. Expressed in rod-shaped photoreceptor cells in the retina that mediate vision in dim light (at protein level).

The protein resides in the membrane. Its subcellular location is the cell projection. It localises to the cilium. It is found in the photoreceptor outer segment. Functionally, photoreceptor required for image-forming vision at low light intensity. Required for photoreceptor cell viability after birth. Light-induced isomerization of 11-cis to all-trans retinal triggers a conformational change that activates signaling via G-proteins. Subsequent receptor phosphorylation mediates displacement of the bound G-protein alpha subunit by the arrestin SAG and terminates signaling. The chain is Rhodopsin (RHO) from Bos taurus (Bovine).